We begin with the raw amino-acid sequence, 253 residues long: CENP-A recruiting complex protein mis20 (253 aa).

A disordered region spans residues 113-136; the sequence is TGPTTSKNKHPSHSNTIRSPPYKV.

As to quaternary structure, component of the CENP-A recruiting complex composed of at least mis16, mis19, mis19 and mis20.

Its subcellular location is the cytoplasm. It localises to the cytoskeleton. It is found in the microtubule organizing center. The protein localises to the spindle pole body. The protein resides in the chromosome. Its subcellular location is the centromere. In terms of biological role, component of the CENP-A recruiting complex that ensures the integrity of mitotic spindles through maintenance of kinetochore factors mis6/CENP-I and cnp1/CENP-A. Seems dispensable for proper chromosome segregation. The sequence is that of CENP-A recruiting complex protein mis20 from Schizosaccharomyces pombe (strain 972 / ATCC 24843) (Fission yeast).